The chain runs to 166 residues: Large ribosomal subunit protein uL10 (166 aa).

The protein belongs to the universal ribosomal protein uL10 family. In terms of assembly, part of the ribosomal stalk of the 50S ribosomal subunit. The N-terminus interacts with L11 and the large rRNA to form the base of the stalk. The C-terminus forms an elongated spine to which L12 dimers bind in a sequential fashion forming a multimeric L10(L12)X complex.

Functionally, forms part of the ribosomal stalk, playing a central role in the interaction of the ribosome with GTP-bound translation factors. The chain is Large ribosomal subunit protein uL10 from Lactobacillus johnsonii (strain CNCM I-12250 / La1 / NCC 533).